Reading from the N-terminus, the 279-residue chain is Probable endonuclease 4 (279 aa).

His-69, His-109, Glu-145, Asp-179, His-182, His-216, Asp-229, His-231, and Glu-261 together coordinate Zn(2+).

The protein belongs to the AP endonuclease 2 family. Requires Zn(2+) as cofactor.

The enzyme catalyses Endonucleolytic cleavage to 5'-phosphooligonucleotide end-products.. In terms of biological role, endonuclease IV plays a role in DNA repair. It cleaves phosphodiester bonds at apurinic or apyrimidinic (AP) sites, generating a 3'-hydroxyl group and a 5'-terminal sugar phosphate. The polypeptide is Probable endonuclease 4 (Chlorobium phaeovibrioides (strain DSM 265 / 1930) (Prosthecochloris vibrioformis (strain DSM 265))).